Consider the following 190-residue polypeptide: 7-methyl-GTP pyrophosphatase (190 aa).

Residue Asp-69 is the Proton acceptor of the active site.

The protein belongs to the Maf family. YceF subfamily. Requires a divalent metal cation as cofactor.

The protein resides in the cytoplasm. The catalysed reaction is N(7)-methyl-GTP + H2O = N(7)-methyl-GMP + diphosphate + H(+). Its function is as follows. Nucleoside triphosphate pyrophosphatase that hydrolyzes 7-methyl-GTP (m(7)GTP). May have a dual role in cell division arrest and in preventing the incorporation of modified nucleotides into cellular nucleic acids. This Xanthomonas oryzae pv. oryzae (strain MAFF 311018) protein is 7-methyl-GTP pyrophosphatase.